The primary structure comprises 238 residues: Probable transcriptional regulatory protein SAK_1658 (238 aa).

Belongs to the TACO1 family. YeeN subfamily.

It localises to the cytoplasm. In Streptococcus agalactiae serotype Ia (strain ATCC 27591 / A909 / CDC SS700), this protein is Probable transcriptional regulatory protein SAK_1658.